A 1076-amino-acid chain; its full sequence is DNA-directed RNA polymerase subunit beta (1076 aa).

The protein belongs to the RNA polymerase beta chain family. In terms of assembly, in plastids the minimal PEP RNA polymerase catalytic core is composed of four subunits: alpha, beta, beta', and beta''. When a (nuclear-encoded) sigma factor is associated with the core the holoenzyme is formed, which can initiate transcription.

The protein localises to the plastid. The protein resides in the chloroplast. The enzyme catalyses RNA(n) + a ribonucleoside 5'-triphosphate = RNA(n+1) + diphosphate. Functionally, DNA-dependent RNA polymerase catalyzes the transcription of DNA into RNA using the four ribonucleoside triphosphates as substrates. This chain is DNA-directed RNA polymerase subunit beta, found in Hordeum vulgare (Barley).